Consider the following 354-residue polypeptide: Trans-3-hydroxy-L-proline dehydratase (354 aa).

Cys-104 (proton acceptor) is an active-site residue. Residues 105–106 (GH), Asp-269, and 274–275 (GS) each bind substrate.

It belongs to the proline racemase family. In terms of assembly, homodimer. As to expression, ubiquitously expressed.

The catalysed reaction is trans-3-hydroxy-L-proline = 1-pyrroline-2-carboxylate + H2O. In terms of biological role, catalyzes the dehydration of trans-3-hydroxy-L-proline to Delta(1)-pyrroline-2-carboxylate (Pyr2C). May be required to degrade trans-3-hydroxy-L-proline from the diet and originating from the degradation of proteins such as collagen-IV that contain it. The sequence is that of Trans-3-hydroxy-L-proline dehydratase (L3HYPDH) from Homo sapiens (Human).